Reading from the N-terminus, the 533-residue chain is Undecaprenyl phosphate-alpha-4-amino-4-deoxy-L-arabinose arabinosyl transferase (533 aa).

13 consecutive transmembrane segments (helical) span residues 10-30, 64-84, 86-106, 113-133, 137-157, 170-190, 207-227, 257-277, 290-310, 312-332, 345-365, 377-397, and 402-422; these read LLLA…GLWI, PAGY…LFGV, IASA…AGKI, SFAS…AGYS, PQFT…VHSI, VACG…PAII, FGPL…LAVH, WWFY…LLPV, DTAF…LSKG, LPTY…DALV, VNGI…IYVQ, HLLL…LQGI, and FWAL…AALP.

Belongs to the glycosyltransferase 83 family.

It is found in the cell inner membrane. It catalyses the reaction 4-amino-4-deoxy-alpha-L-arabinopyranosyl di-trans,octa-cis-undecaprenyl phosphate + lipid IVA = lipid IIA + di-trans,octa-cis-undecaprenyl phosphate.. Its pathway is lipopolysaccharide metabolism; 4-amino-4-deoxy-beta-L-arabinose-lipid A biosynthesis. In terms of biological role, catalyzes the transfer of the L-Ara4N moiety of the glycolipid undecaprenyl phosphate-alpha-L-Ara4N to lipid A. The modified arabinose is attached to lipid A and is required for resistance to polymyxin and cationic antimicrobial peptides. The sequence is that of Undecaprenyl phosphate-alpha-4-amino-4-deoxy-L-arabinose arabinosyl transferase from Pseudomonas savastanoi pv. phaseolicola (strain 1448A / Race 6) (Pseudomonas syringae pv. phaseolicola (strain 1448A / Race 6)).